Here is a 510-residue protein sequence, read N- to C-terminus: Replication factor C large subunit (510 aa).

48–55 (GPPGTGKT) contributes to the ATP binding site. The tract at residues 459–510 (MESMLERKREESEVEEEAKEIEEAVEKAEEEEEREEKKKEGGGEQRTLDAFF) is disordered. Positions 493-510 (EEKKKEGGGEQRTLDAFF) are enriched in basic and acidic residues.

Belongs to the activator 1 small subunits family. RfcL subfamily. As to quaternary structure, heteromultimer composed of small subunits (RfcS) and large subunits (RfcL).

Part of the RFC clamp loader complex which loads the PCNA sliding clamp onto DNA. The protein is Replication factor C large subunit of Methanopyrus kandleri (strain AV19 / DSM 6324 / JCM 9639 / NBRC 100938).